The chain runs to 446 residues: Histidine--tRNA ligase (446 aa).

The protein belongs to the class-II aminoacyl-tRNA synthetase family. As to quaternary structure, homodimer.

It is found in the cytoplasm. It catalyses the reaction tRNA(His) + L-histidine + ATP = L-histidyl-tRNA(His) + AMP + diphosphate + H(+). This Burkholderia pseudomallei (strain K96243) protein is Histidine--tRNA ligase.